The sequence spans 109 residues: Large ribosomal subunit protein uL22 (109 aa).

It belongs to the universal ribosomal protein uL22 family. As to quaternary structure, part of the 50S ribosomal subunit.

Its function is as follows. This protein binds specifically to 23S rRNA; its binding is stimulated by other ribosomal proteins, e.g. L4, L17, and L20. It is important during the early stages of 50S assembly. It makes multiple contacts with different domains of the 23S rRNA in the assembled 50S subunit and ribosome. In terms of biological role, the globular domain of the protein is located near the polypeptide exit tunnel on the outside of the subunit, while an extended beta-hairpin is found that lines the wall of the exit tunnel in the center of the 70S ribosome. The protein is Large ribosomal subunit protein uL22 of Ralstonia nicotianae (strain ATCC BAA-1114 / GMI1000) (Ralstonia solanacearum).